A 222-amino-acid polypeptide reads, in one-letter code: Germin-like protein subfamily 1 member 16 (222 aa).

The first 22 residues, Met-1–Ala-22, serve as a signal peptide directing secretion. A disulfide bond links Cys-32 and Cys-48. A Cupin type-1 domain is found at Ser-62–Lys-213. N-linked (GlcNAc...) asparagine glycosylation is present at Asn-77. 4 residues coordinate Mn(2+): His-110, His-112, Glu-117, and His-159.

It belongs to the germin family. In terms of assembly, oligomer (believed to be a pentamer but probably hexamer).

It localises to the secreted. The protein localises to the extracellular space. It is found in the apoplast. May play a role in plant defense. Probably has no oxalate oxidase activity even if the active site is conserved. The sequence is that of Germin-like protein subfamily 1 member 16 from Arabidopsis thaliana (Mouse-ear cress).